Consider the following 126-residue polypeptide: Probable small nuclear ribonucleoprotein Sm D1 (126 aa).

One can recognise a Sm domain in the interval 2-74 (KLVRFLMKLS…IRYIILPDPL (73 aa)). The interval 86–126 (RKKARAARAGASRGRGRGGMRGGRGGRGRGRGGPRGGGPRR) is disordered. Residues 99–126 (GRGRGGMRGGRGGRGRGRGGPRGGGPRR) show a composition bias toward basic residues.

The protein belongs to the snRNP core protein family.

It localises to the nucleus. The protein localises to the cytoplasm. It is found in the cytosol. Functionally, plays a role in pre-mRNA splicing as a core component of the spliceosomal U1, U2, U4 and U5 small nuclear ribonucleoproteins (snRNPs), the building blocks of the spliceosome. The polypeptide is Probable small nuclear ribonucleoprotein Sm D1 (snr-3) (Caenorhabditis elegans).